A 371-amino-acid chain; its full sequence is N-acetyllactosaminide alpha-2,3-sialyltransferase (371 aa).

Gly255 lines the CMP-N-acetyl-beta-neuraminate pocket. Asp258 (proton acceptor) is an active-site residue. CMP-N-acetyl-beta-neuraminate is bound by residues 278 to 282 (APHPR), 299 to 300 (IE), and 322 to 323 (SG). The Proton donor role is filled by His280.

This sequence belongs to the glycosyltransferase 52 family. In terms of assembly, homodimer.

It localises to the cell outer membrane. It catalyses the reaction a beta-D-galactosyl-(1-&gt;4)-N-acetyl-beta-D-glucosaminyl derivative + CMP-N-acetyl-beta-neuraminate = an N-acetyl-alpha-neuraminyl-(2-&gt;3)-beta-D-galactosyl-(1-&gt;4)-N-acetyl-beta-D-glucosaminyl derivative + CMP + H(+). It functions in the pathway bacterial outer membrane biogenesis; lipooligosaccharide biosynthesis. In terms of biological role, catalyzes the transfer of sialic acid from the substrate CMP-N-acetylneuraminate to the terminal galactose residue of the lacto-N-neotetraose branch of surface lipooligosaccharide (LOS), forming an alpha-2,3-sialyl linkage. Thus, functions in the sialylation of LOS, which plays a role in the evasion of the host immune response by protecting N.meningitidis from complement-mediated serum killing and from phagocytic killing by neutrophils. The protein is N-acetyllactosaminide alpha-2,3-sialyltransferase of Neisseria meningitidis serogroup A / serotype 4A (strain DSM 15465 / Z2491).